We begin with the raw amino-acid sequence, 247 residues long: Ribonuclease PH (247 aa).

Phosphate is bound by residues Arg90 and 128–130; that span reads GTR.

It belongs to the RNase PH family. As to quaternary structure, homohexameric ring arranged as a trimer of dimers.

It catalyses the reaction tRNA(n+1) + phosphate = tRNA(n) + a ribonucleoside 5'-diphosphate. Its function is as follows. Phosphorolytic 3'-5' exoribonuclease that plays an important role in tRNA 3'-end maturation. Removes nucleotide residues following the 3'-CCA terminus of tRNAs; can also add nucleotides to the ends of RNA molecules by using nucleoside diphosphates as substrates, but this may not be physiologically important. Probably plays a role in initiation of 16S rRNA degradation (leading to ribosome degradation) during starvation. The polypeptide is Ribonuclease PH (Synechococcus sp. (strain CC9605)).